A 298-amino-acid chain; its full sequence is Mitochondrial substrate carrier family protein N (298 aa).

Residues 1–13 lie on the Mitochondrial intermembrane side of the membrane; that stretch reads MAGDLTPSLFLKY. Solcar repeat units follow at residues 8–92, 104–188, and 207–290; these read SLFL…FKKT, FRIP…TAEN, and QKLS…IKQM. Residues 14–34 traverse the membrane as a helical segment; it reads GFGGALSCSITHSLVVPLDVV. Over 35–60 the chain is Mitochondrial matrix; sequence KTLLQTNPGKYTGMMNGFSTVIKEQG. Residues 61–81 form a helical membrane-spanning segment; the sequence is PSGLLQGLGPTAVGYALQGFL. At 82 to 105 the chain is on the mitochondrial intermembrane side; that stretch reads KFGFYEVFKKTYADAVGEKADQFR. A helical membrane pass occupies residues 106-126; the sequence is IPIWLAASATAEVIADIALCP. The Mitochondrial matrix portion of the chain corresponds to 127–162; that stretch reads NEAVRIRLVAEPTFAKSPVEAFGKIFKQEGVLGFYK. A helical membrane pass occupies residues 163-179; it reads GLPPILLKQVPYTMAKF. The Mitochondrial intermembrane segment spans residues 180 to 208; sequence AVFEFTAENVYKGLAASGKPKESLTDGQK. A helical membrane pass occupies residues 209–229; sequence LSVSLGSGIVAGIVAAIVSQP. At 230 to 262 the chain is on the mitochondrial matrix side; sequence ADTILSKINQEKTDGGVVKAIGNIMRRLGVRGL. The chain crosses the membrane as a helical span at residues 263–283; that stretch reads FLGLPTRCFMVGTLTAGQFFI. The Mitochondrial intermembrane segment spans residues 284–298; the sequence is YDGIKQMLGLTPAKK.

The protein belongs to the mitochondrial carrier (TC 2.A.29) family.

The protein localises to the mitochondrion inner membrane. Its function is as follows. Mitochondrial solute carriers shuttle metabolites, nucleotides, and cofactors through the mitochondrial inner membrane. Transports phosphate groups from the cytosol to the mitochondrial matrix. Phosphate is cotransported with H(+). This is Mitochondrial substrate carrier family protein N (mcfN) from Dictyostelium discoideum (Social amoeba).